The sequence spans 710 residues: Prolyl endopeptidase (710 aa).

N-acetylmethionine is present on methionine 1. Lysine 157 bears the N6-acetyllysine mark. Catalysis depends on charge relay system residues serine 554, aspartate 641, and histidine 680.

This sequence belongs to the peptidase S9A family.

The protein resides in the cytoplasm. The enzyme catalyses Hydrolysis of Pro-|-Xaa &gt;&gt; Ala-|-Xaa in oligopeptides.. Functionally, cleaves peptide bonds on the C-terminal side of prolyl residues within peptides that are up to approximately 30 amino acids long. In Mus musculus (Mouse), this protein is Prolyl endopeptidase (Prep).